Consider the following 124-residue polypeptide: Small ribosomal subunit protein uS12 (124 aa).

Residues 11-20 (GRKRLKKKSK) show a composition bias toward basic residues. The disordered stretch occupies residues 11–30 (GRKRLKKKSKSPALENNPQK). Asp89 is modified (3-methylthioaspartic acid). Residues 105–124 (EGVANRRQSRSRYGAKKPKK) are disordered. Basic residues predominate over residues 111–124 (RQSRSRYGAKKPKK).

Belongs to the universal ribosomal protein uS12 family. As to quaternary structure, part of the 30S ribosomal subunit. Contacts proteins S8 and S17. May interact with IF1 in the 30S initiation complex.

In terms of biological role, with S4 and S5 plays an important role in translational accuracy. Interacts with and stabilizes bases of the 16S rRNA that are involved in tRNA selection in the A site and with the mRNA backbone. Located at the interface of the 30S and 50S subunits, it traverses the body of the 30S subunit contacting proteins on the other side and probably holding the rRNA structure together. The combined cluster of proteins S8, S12 and S17 appears to hold together the shoulder and platform of the 30S subunit. The polypeptide is Small ribosomal subunit protein uS12 (Kosmotoga olearia (strain ATCC BAA-1733 / DSM 21960 / TBF 19.5.1)).